Reading from the N-terminus, the 138-residue chain is Probable histone H2AXb (138 aa).

Residues 1 to 10 show a composition bias toward gly residues; it reads MSSAGGGGGR. A disordered region spans residues 1–24; sequence MSSAGGGGGRGKSKGSKSVSRSSK. S135 carries the phosphoserine; by ATM and ATR modification. Residues 135–136 carry the [ST]-Q motif motif; it reads SQ.

Belongs to the histone H2A family. In terms of assembly, the nucleosome is a histone octamer containing two molecules each of H2A, H2B, H3 and H4 assembled in one H3-H4 heterotetramer and two H2A-H2B heterodimers. The octamer wraps approximately 147 bp of DNA. Interacts with numerous proteins required for DNA damage signaling and repair when phosphorylated on Ser-135. Post-translationally, phosphorylated to form H2AXS139ph (gamma-H2AX) in response to DNA double strand breaks (DSBs) generated by exogenous genotoxic agents and by stalled replication forks, and may also occur during meiotic recombination events. Phosphorylation can extend up to several thousand nucleosomes from the actual site of the DSB and may mark the surrounding chromatin for recruitment of proteins required for DNA damage signaling and repair. Widespread phosphorylation may also serve to amplify the damage signal or aid repair of persistent lesions. H2AXS139ph in response to ionizing radiation is mediated by ATM while defects in DNA replication induce H2AXS139ph subsequent to activation of ATR. Dephosphorylation of H2AXS139ph by PP2A is required for DNA DSB repair.

The protein resides in the nucleus. It localises to the chromosome. In terms of biological role, variant histone H2A which replaces conventional H2A in a subset of nucleosomes. Nucleosomes wrap and compact DNA into chromatin, limiting DNA accessibility to the cellular machineries which require DNA as a template. Histones thereby play a central role in transcription regulation, DNA repair, DNA replication and chromosomal stability. DNA accessibility is regulated via a complex set of post-translational modifications of histones, also called histone code, and nucleosome remodeling. Required for checkpoint-mediated arrest of cell cycle progression in response to low doses of ionizing radiation and for efficient repair of DNA double strand breaks (DSBs) specifically when modified by C-terminal phosphorylation. This Oryza sativa subsp. indica (Rice) protein is Probable histone H2AXb.